Here is a 180-residue protein sequence, read N- to C-terminus: MAKRGKNKIEWDNTDWEQEEEEIIWVSKSEIKRDAEALKKLGEKLVDLTKAKLEKIPLEEKLLEAIELAQRLQKEARRRQLQYIGKLLRNIDVEPIQDALEKLENKHQQQQAMLHKLEMLRDTLIDNPEAITQFLEQHPDADRQHLRNLVRAAQKEKAQNKPPKAYREIFQYLKDFMLED.

It belongs to the DarP family.

It localises to the cytoplasm. Member of a network of 50S ribosomal subunit biogenesis factors which assembles along the 30S-50S interface, preventing incorrect 23S rRNA structures from forming. Promotes peptidyl transferase center (PTC) maturation. The chain is Dual-action ribosomal maturation protein DarP from Pasteurella multocida (strain Pm70).